The chain runs to 842 residues: 9-beta-pimara-7,15-diene synthase, chloroplastic (842 aa).

Residues 1 to 56 (MASPMEAVARSSLVLAPRRRRALGLLPAAAAAAPFVLDCRRRHNGGMRRPHVSFAC) constitute a chloroplast transit peptide. Mg(2+) contacts are provided by D591, D595, N735, S739, and E743. The short motif at 591–595 (DDFFD) is the DDXXD motif element.

Belongs to the terpene synthase family. Requires Mg(2+) as cofactor. Expressed in roots.

It is found in the plastid. It localises to the chloroplast. It carries out the reaction 9alpha-copalyl diphosphate = 9beta-pimara-7,15-diene + diphosphate. Involved in the biosynthesis of momilactone A and B phytoalexins. Catalyzes the conversion of syn-copalyl diphosphate to the phytoalexin precursor syn-pimara-7,15-diene. The chain is 9-beta-pimara-7,15-diene synthase, chloroplastic from Oryza sativa subsp. japonica (Rice).